Consider the following 320-residue polypeptide: RNA polymerase sigma factor SigA2 (320 aa).

Residues 89 to 159 are sigma-70 factor domain-2; the sequence is MIEANLRLVV…TRAIAQQSRT (71 aa). An Interaction with polymerase core subunit RpoC motif is present at residues 113–116; the sequence is DLIQ. Positions 168-243 are sigma-70 factor domain-3; the sequence is EKLNKLKKTQ…EDEQSSPSDY (76 aa). Residues 256-310 are sigma-70 factor domain-4; that stretch reads LMAELTPQQQAVIALRYGLDEGDSLSLAKVGERLNISRERVRKLERQAMDHLRRR. The segment at residues 282-301 is a DNA-binding region (H-T-H motif); sequence LAKVGERLNISRERVRKLER.

The protein belongs to the sigma-70 factor family.

It localises to the cytoplasm. Sigma factors are initiation factors that promote the attachment of RNA polymerase to specific initiation sites and are then released. This sigma factor is a component of the biological clock pathway that affects the circadian expression of a subset of genes in this bacterium. This chain is RNA polymerase sigma factor SigA2 (sigA2), found in Synechococcus elongatus (strain ATCC 33912 / PCC 7942 / FACHB-805) (Anacystis nidulans R2).